The primary structure comprises 606 residues: NADH-ubiquinone oxidoreductase chain 5 (606 aa).

A run of 16 helical transmembrane segments spans residues 3-23 (LFTS…LMSL), 35-55 (YVKT…LIFI), 87-107 (MIFT…SMWY), 117-137 (FFKY…ANNL), 140-160 (LFIG…WWYG), 171-191 (AILY…WFLF), 211-233 (LPLL…HPWL), 241-261 (TPVS…FLLI), 273-293 (MQTL…ICAL), 301-320 (IIAF…IGIN), 325-347 (AFLH…GSII), 366-386 (LPFT…TPFL), 402-422 (SYTN…TAVY), 457-477 (LLIG…PMTI), 488-508 (LTAL…SLMT), and 582-602 (GLIK…MLLF).

This sequence belongs to the complex I subunit 5 family. As to quaternary structure, core subunit of respiratory chain NADH dehydrogenase (Complex I) which is composed of 45 different subunits.

It is found in the mitochondrion inner membrane. The enzyme catalyses a ubiquinone + NADH + 5 H(+)(in) = a ubiquinol + NAD(+) + 4 H(+)(out). Its function is as follows. Core subunit of the mitochondrial membrane respiratory chain NADH dehydrogenase (Complex I) which catalyzes electron transfer from NADH through the respiratory chain, using ubiquinone as an electron acceptor. Essential for the catalytic activity and assembly of complex I. The protein is NADH-ubiquinone oxidoreductase chain 5 (MT-ND5) of Pseudosoriculus fumidus (Taiwanese brown-toothed shrew).